Reading from the N-terminus, the 372-residue chain is Cytochrome b (372 aa).

Helical transmembrane passes span 25 to 45 (FGSM…FLAI), 69 to 90 (WIMQ…YIHI), 105 to 125 (WLSG…GYVL), and 170 to 190 (FFAL…IHIM). Residues His75 and His89 each contribute to the heme b site. Heme b-binding residues include His174 and His188. An a ubiquinone-binding site is contributed by His193. A run of 4 helical transmembrane segments spans residues 218–238 (YKDM…LSFS), 280–300 (LGGT…PFTH), 312–332 (LSQI…WTAS), and 339–358 (FILI…IMAP).

The protein belongs to the cytochrome b family. In terms of assembly, the cytochrome bc1 complex contains 3 respiratory subunits (MT-CYB, CYC1 and UQCRFS1), 2 core proteins (UQCRC1 and UQCRC2) and probably 6 low-molecular weight proteins. The cofactor is heme b.

It is found in the mitochondrion inner membrane. Its function is as follows. Component of the ubiquinol-cytochrome c reductase complex (complex III or cytochrome b-c1 complex) that is part of the mitochondrial respiratory chain. The b-c1 complex mediates electron transfer from ubiquinol to cytochrome c. Contributes to the generation of a proton gradient across the mitochondrial membrane that is then used for ATP synthesis. This chain is Cytochrome b (MT-CYB), found in Hemachatus haemachatus (Rinkhals).